The chain runs to 441 residues: SVGFKAGVKDYKLTYYTPAYQTKDTDILAAFRVSPQPGVPPEEAGAAVAAESSTGTWTTVWTDGLTSLDRYKGRCYYIEPVAGEENQYIAYVAYPLDLFEEGSVTNMFTSIVGNVFGFKALRALRLEDLRIPTAYVKTFQGPPHGIQVERDKLNKYGRPLLGCTIKPKLGLSAKNYGRAVYECLRGGLDFTKDDENVNSQPFMRWRDRFVFCAEALYKAQAETGEIKGHYLNATAGTCEEMNKRAVFARELGVPIIMHDYLTGGFTANTSLAHYCRDNGLLLHIHRAMHAVIDRQKNHGIHFRVLAKALRMSGGDHIHSGTVVGKLEGEREITLGFVDLLRDDYIEKDRDRGIYFTQDWVSLPGVLPVASGGIHVWHMPALTEIFGDDSVLQFGGGTLGHPWGNAPGGVANRVALEACVQARNEGRDLAREGNEIIREASK.

Position 5 is an N6,N6,N6-trimethyllysine (K5). The substrate site is built by N114 and T164. K166 serves as the catalytic Proton acceptor. Residue K168 participates in substrate binding. Mg(2+) contacts are provided by K192, D194, and E195. K192 bears the N6-carboxylysine mark. H285 functions as the Proton acceptor in the catalytic mechanism. Residues R286, H318, and S370 each coordinate substrate.

The protein belongs to the RuBisCO large chain family. Type I subfamily. Heterohexadecamer of 8 large chains and 8 small chains; disulfide-linked. The disulfide link is formed within the large subunit homodimers. Mg(2+) serves as cofactor. The disulfide bond which can form in the large chain dimeric partners within the hexadecamer appears to be associated with oxidative stress and protein turnover.

Its subcellular location is the plastid. The protein resides in the chloroplast. The enzyme catalyses 2 (2R)-3-phosphoglycerate + 2 H(+) = D-ribulose 1,5-bisphosphate + CO2 + H2O. The catalysed reaction is D-ribulose 1,5-bisphosphate + O2 = 2-phosphoglycolate + (2R)-3-phosphoglycerate + 2 H(+). In terms of biological role, ruBisCO catalyzes two reactions: the carboxylation of D-ribulose 1,5-bisphosphate, the primary event in carbon dioxide fixation, as well as the oxidative fragmentation of the pentose substrate in the photorespiration process. Both reactions occur simultaneously and in competition at the same active site. In Begonia metallica x Begonia sanguinea, this protein is Ribulose bisphosphate carboxylase large chain.